Consider the following 632-residue polypeptide: Phosphomethylpyrimidine synthase (632 aa).

Positions 1-23 (MNIRSNPQQTVPAVTTGPLSSSR) are enriched in polar residues. Residues 1–26 (MNIRSNPQQTVPAVTTGPLSSSRKIF) form a disordered region. Residues asparagine 221, methionine 250, tyrosine 279, histidine 315, 335–337 (SRG), 376–379 (DGLR), and glutamate 415 each bind substrate. Zn(2+) is bound at residue histidine 419. Position 442 (tyrosine 442) interacts with substrate. Histidine 483 lines the Zn(2+) pocket. [4Fe-4S] cluster is bound by residues cysteine 563, cysteine 566, and cysteine 571.

Belongs to the ThiC family. Homodimer. The cofactor is [4Fe-4S] cluster.

The enzyme catalyses 5-amino-1-(5-phospho-beta-D-ribosyl)imidazole + S-adenosyl-L-methionine = 4-amino-2-methyl-5-(phosphooxymethyl)pyrimidine + CO + 5'-deoxyadenosine + formate + L-methionine + 3 H(+). The protein operates within cofactor biosynthesis; thiamine diphosphate biosynthesis. In terms of biological role, catalyzes the synthesis of the hydroxymethylpyrimidine phosphate (HMP-P) moiety of thiamine from aminoimidazole ribotide (AIR) in a radical S-adenosyl-L-methionine (SAM)-dependent reaction. The sequence is that of Phosphomethylpyrimidine synthase from Bradyrhizobium diazoefficiens (strain JCM 10833 / BCRC 13528 / IAM 13628 / NBRC 14792 / USDA 110).